Consider the following 298-residue polypeptide: Probable tRNA(His) guanylyltransferase (298 aa).

Mg(2+)-binding residues include Asp58, Gly59, and Asp105. Residues 58–63 (DGRNFH) and 104–105 (SD) contribute to the GTP site.

It belongs to the tRNA(His) guanylyltransferase family. As to quaternary structure, homotetramer. Interacts with MFN1 and MFN2; functions as a guanyl-nucleotide exchange factor/GEF for MFN2 and also probably MFN1. Requires Mg(2+) as cofactor. Expressed in many tissues.

It localises to the cytoplasm. The protein localises to the mitochondrion outer membrane. The catalysed reaction is a 5'-end ribonucleotide-tRNA(His) + GTP + ATP + H2O = a 5'-end phospho-guanosine-ribonucleotide-tRNA(His) + AMP + 2 diphosphate + H(+). Its function is as follows. Adds a GMP to the 5'-end of tRNA(His) after transcription and RNase P cleavage. This step is essential for proper recognition of the tRNA and for the fidelity of protein synthesis. Also functions as a guanyl-nucleotide exchange factor/GEF for the MFN1 and MFN2 mitofusins thereby regulating mitochondrial fusion. By regulating both mitochondrial dynamics and bioenergetic function, it contributes to cell survival following oxidative stress. The polypeptide is Probable tRNA(His) guanylyltransferase (THG1L) (Homo sapiens (Human)).